A 186-amino-acid chain; its full sequence is MAGGGTEAFPDLGEHCQDPDCKLLDFLPFTCDGCKLVFCLEHRSYKSHNCPKSDHGSRTVSICETCSIAIETTGFDEKGIKSLLEKHERSGDCDPNKKKKPTCPVKRCKEILTFANNLTCKYCGVKFCLKHRFPTDHVCNKKIINTAGTSSRWNERFMEALSLRNQKGCGRGSSVSSKSSPSVRSF.

2 AN1-type zinc fingers span residues 10-58 and 97-147; these read PDLG…HGSR and KKKK…INTA. Zn(2+) is bound by residues cysteine 16, cysteine 21, cysteine 31, cysteine 34, cysteine 39, histidine 42, histidine 48, cysteine 50, cysteine 103, cysteine 108, cysteine 120, cysteine 123, cysteine 128, histidine 131, histidine 137, and cysteine 139. A disordered region spans residues 167 to 186; sequence KGCGRGSSVSSKSSPSVRSF. The segment covering 172–186 has biased composition (low complexity); it reads GSSVSSKSSPSVRSF.

Functionally, may be involved in environmental stress response. This Arabidopsis thaliana (Mouse-ear cress) protein is Zinc finger AN1 domain-containing stress-associated protein 12 (SAP12).